Consider the following 144-residue polypeptide: Deoxyuridine 5'-triphosphate nucleotidohydrolase (144 aa).

Substrate is bound by residues 63–65 (RSG), Asn76, and 80–82 (TVD).

This sequence belongs to the dUTPase family. The cofactor is Mg(2+).

It carries out the reaction dUTP + H2O = dUMP + diphosphate + H(+). Its pathway is pyrimidine metabolism; dUMP biosynthesis; dUMP from dCTP (dUTP route): step 2/2. In terms of biological role, this enzyme is involved in nucleotide metabolism: it produces dUMP, the immediate precursor of thymidine nucleotides and it decreases the intracellular concentration of dUTP so that uracil cannot be incorporated into DNA. In Treponema denticola (strain ATCC 35405 / DSM 14222 / CIP 103919 / JCM 8153 / KCTC 15104), this protein is Deoxyuridine 5'-triphosphate nucleotidohydrolase.